A 244-amino-acid chain; its full sequence is ATP synthase subunit 4, mitochondrial (244 aa).

The N-terminal 35 residues, 1 to 35 (MSMSMGVRGLALRSVSKTLFSQGVRCPSMVIGARY), are a transit peptide targeting the mitochondrion. Ser144 carries the phosphoserine modification.

The protein belongs to the eukaryotic ATPase B chain family. F-type ATPases have 2 components, CF(1) - the catalytic core - and CF(0) - the membrane proton channel. In yeast, the dimeric form of ATP synthase consists of 17 polypeptides: alpha, beta, gamma, delta, epsilon, 4 (B), 5 (OSCP), 6 (A), 8, 9 (C), d, E (Tim11), f, g, h, i/j and k.

Its subcellular location is the mitochondrion. The protein localises to the mitochondrion inner membrane. Mitochondrial membrane ATP synthase (F(1)F(0) ATP synthase or Complex V) produces ATP from ADP in the presence of a proton gradient across the membrane which is generated by electron transport complexes of the respiratory chain. F-type ATPases consist of two structural domains, F(1) - containing the extramembraneous catalytic core, and F(0) - containing the membrane proton channel, linked together by a central stalk and a peripheral stalk. During catalysis, ATP synthesis in the catalytic domain of F(1) is coupled via a rotary mechanism of the central stalk subunits to proton translocation. Part of the complex F(0) domain and the peripheric stalk, which acts as a stator to hold the catalytic alpha(3)beta(3) subcomplex and subunit a/ATP6 static relative to the rotary elements. This Saccharomyces cerevisiae (strain ATCC 204508 / S288c) (Baker's yeast) protein is ATP synthase subunit 4, mitochondrial (ATP4).